A 438-amino-acid polypeptide reads, in one-letter code: UDP-N-acetyl-D-mannosamine dehydrogenase (438 aa).

NAD(+) is bound by residues tyrosine 21, isoleucine 22, aspartate 41, arginine 46, threonine 93, and threonine 131. Positions 160, 161, 212, 216, 219, 250, 252, and 263 each coordinate UDP-N-acetyl-alpha-D-mannosaminouronate. Lysine 212 serves as the catalytic Proton donor/acceptor. Cysteine 266 functions as the Nucleophile in the catalytic mechanism. UDP-N-acetyl-alpha-D-mannosaminouronate contacts are provided by tyrosine 323 and lysine 324. An NAD(+)-binding site is contributed by arginine 331. Residue lysine 409 coordinates UDP-N-acetyl-alpha-D-mannosaminouronate.

The protein belongs to the UDP-glucose/GDP-mannose dehydrogenase family. As to quaternary structure, homotetramer; probably dimer of dimers.

It catalyses the reaction UDP-N-acetyl-alpha-D-mannosamine + 2 NAD(+) + H2O = UDP-N-acetyl-alpha-D-mannosaminouronate + 2 NADH + 3 H(+). In terms of biological role, catalyzes the four-electron oxidation of UDP-N-acetyl-D-mannosamine (UDP-ManNAc), reducing NAD(+) and releasing UDP-N-acetylmannosaminuronic acid (UDP-ManNAcA). This Methanococcus aeolicus (strain ATCC BAA-1280 / DSM 17508 / OCM 812 / Nankai-3) protein is UDP-N-acetyl-D-mannosamine dehydrogenase (wecC).